A 685-amino-acid chain; its full sequence is MQDIQLDTLLSEDVTPENASQVMQALSQSLNEHNIRYYVDDAPSITDSEYDRLMQRLLKLEALYPHLIVADSPTQRVGGLALAKFDQITHLKPMLSLDNAFDEADFSAFHKRVTDKVGEVSFCCEPKLDGLAVSILYRHGVLERAATRGDGSVGEDITENVKTIKSIPLKLRGNDFPELVEVRGEAFMPKAAFEALNDRARAKDEKLFVNPRNAAAGSLRQLDSKITAARSLAFYAYALGVVEPDSHPLAKTHFEQLQQLKSWGLPISSEIKVCAELSQVYDYYKDILTRRSDLAFEIDGVVMKVNDIAQQQRLGFVAKSPRWAIAYKFPAQEEMTLLEGVDFQVGRTGAVTPVARLKPVFVGGVTVSNATLHNADEIARLGIKVGDTVIIRRAGDVIPQIVAIVPERRPETATDIVFPHNCPVCGSLVERLEGEAVARCSGGLFCEAQRKEAIKHFASRKALDIDGMGDKVVEQLIDKELVQSPADLFKLTASMMTMLDRMGMKSATNLAAAIEAAKTTTLARFLYALGIREVGEATAANLAAHFASLDALRVATVEQLTEVEDVGAVVAQHVAHFFAQPHNLEVIDALIAAGVHWPAIEAPSADAQPLKGQTWVLTGTLNQLNRNDAKAQLQALGAKVAGSVSKNTDCLVAGEAAGSKLAKAQELGVKVMDEDELLALLAANA.

NAD(+) is bound by residues 47–51 (DSEYD), 96–97 (SL), and glutamate 125. Lysine 127 serves as the catalytic N6-AMP-lysine intermediate. 4 residues coordinate NAD(+): arginine 148, glutamate 185, lysine 304, and lysine 328. Residues cysteine 422, cysteine 425, cysteine 440, and cysteine 446 each contribute to the Zn(2+) site. One can recognise a BRCT domain in the interval 605–685 (ADAQPLKGQT…ELLALLAANA (81 aa)).

The protein belongs to the NAD-dependent DNA ligase family. LigA subfamily. Requires Mg(2+) as cofactor. It depends on Mn(2+) as a cofactor.

The catalysed reaction is NAD(+) + (deoxyribonucleotide)n-3'-hydroxyl + 5'-phospho-(deoxyribonucleotide)m = (deoxyribonucleotide)n+m + AMP + beta-nicotinamide D-nucleotide.. In terms of biological role, DNA ligase that catalyzes the formation of phosphodiester linkages between 5'-phosphoryl and 3'-hydroxyl groups in double-stranded DNA using NAD as a coenzyme and as the energy source for the reaction. It is essential for DNA replication and repair of damaged DNA. The sequence is that of DNA ligase from Shewanella baltica (strain OS195).